The primary structure comprises 217 residues: tRNA (guanine-N(7)-)-methyltransferase (217 aa).

Residues Glu-43, Asp-68, Asn-101, and Asn-123 each coordinate S-adenosyl-L-methionine. Lys-127 is a binding site for substrate. The interval 129 to 134 (RHNKRR) is interaction with RNA. Residues Asp-159 and 196–199 (TEYE) each bind substrate.

It belongs to the class I-like SAM-binding methyltransferase superfamily. TrmB family.

The enzyme catalyses guanosine(46) in tRNA + S-adenosyl-L-methionine = N(7)-methylguanosine(46) in tRNA + S-adenosyl-L-homocysteine. It participates in tRNA modification; N(7)-methylguanine-tRNA biosynthesis. Functionally, catalyzes the formation of N(7)-methylguanine at position 46 (m7G46) in tRNA. This chain is tRNA (guanine-N(7)-)-methyltransferase, found in Clostridium botulinum (strain Langeland / NCTC 10281 / Type F).